Here is a 98-residue protein sequence, read N- to C-terminus: NADH-ubiquinone oxidoreductase chain 4L (98 aa).

Transmembrane regions (helical) follow at residues 1–21 (MMSI…GVLI), 28–48 (STLL…ALLI), and 59–79 (APLI…ALLV).

Belongs to the complex I subunit 4L family. In terms of assembly, core subunit of respiratory chain NADH dehydrogenase (Complex I) which is composed of 45 different subunits.

The protein localises to the mitochondrion inner membrane. The catalysed reaction is a ubiquinone + NADH + 5 H(+)(in) = a ubiquinol + NAD(+) + 4 H(+)(out). In terms of biological role, core subunit of the mitochondrial membrane respiratory chain NADH dehydrogenase (Complex I) which catalyzes electron transfer from NADH through the respiratory chain, using ubiquinone as an electron acceptor. Part of the enzyme membrane arm which is embedded in the lipid bilayer and involved in proton translocation. This chain is NADH-ubiquinone oxidoreductase chain 4L (MT-ND4L), found in Osphranter robustus (Wallaroo).